The sequence spans 529 residues: Putative inorganic phosphate cotransporter (529 aa).

The next 8 membrane-spanning stretches (helical) occupy residues 37 to 57 (FATR…AYVM), 110 to 130 (YILS…GILA), 148 to 168 (VFAF…LCAV), 202 to 222 (AVYA…GLLA), 232 to 252 (SIFY…LIFV), 338 to 358 (LPYL…DWMI), 429 to 449 (FLMS…PIAA), and 466 to 486 (IVFF…NIFG). A disordered region spans residues 495-529 (NPEDDEQKPALQTTVTTSPARLSNGSTAPAAISSS). Residues 504–529 (ALQTTVTTSPARLSNGSTAPAAISSS) are compositionally biased toward polar residues.

The protein belongs to the major facilitator superfamily. Sodium/anion cotransporter family.

Its subcellular location is the membrane. In terms of biological role, may be an inorganic phosphate cotransporter. This chain is Putative inorganic phosphate cotransporter (Picot), found in Drosophila melanogaster (Fruit fly).